Here is an 81-residue protein sequence, read N- to C-terminus: ATP synthase subunit c, chloroplastic (81 aa).

The next 2 helical transmembrane spans lie at 7-27 and 57-77; these read AASV…PGVG and LAFM…LLFA.

This sequence belongs to the ATPase C chain family. As to quaternary structure, F-type ATPases have 2 components, F(1) - the catalytic core - and F(0) - the membrane proton channel. F(1) has five subunits: alpha(3), beta(3), gamma(1), delta(1), epsilon(1). F(0) has four main subunits: a(1), b(1), b'(1) and c(10-14). The alpha and beta chains form an alternating ring which encloses part of the gamma chain. F(1) is attached to F(0) by a central stalk formed by the gamma and epsilon chains, while a peripheral stalk is formed by the delta, b and b' chains.

The protein localises to the plastid. Its subcellular location is the chloroplast thylakoid membrane. F(1)F(0) ATP synthase produces ATP from ADP in the presence of a proton or sodium gradient. F-type ATPases consist of two structural domains, F(1) containing the extramembraneous catalytic core and F(0) containing the membrane proton channel, linked together by a central stalk and a peripheral stalk. During catalysis, ATP synthesis in the catalytic domain of F(1) is coupled via a rotary mechanism of the central stalk subunits to proton translocation. In terms of biological role, key component of the F(0) channel; it plays a direct role in translocation across the membrane. A homomeric c-ring of between 10-14 subunits forms the central stalk rotor element with the F(1) delta and epsilon subunits. This chain is ATP synthase subunit c, chloroplastic, found in Arabis hirsuta (Hairy rock-cress).